The primary structure comprises 65 residues: UPF0434 protein IL1511 (65 aa).

This sequence belongs to the UPF0434 family.

The protein is UPF0434 protein IL1511 of Idiomarina loihiensis (strain ATCC BAA-735 / DSM 15497 / L2-TR).